The sequence spans 607 residues: MNLEELKKRQGKIRNFSIIAHIDHGKSTLADRILEKTETVSSREMQAQLLDSMDLERERGITIKLNAIELNYTAKDGETYIFHLIDTPGHVDFTYEVSRSLAACEGAILVVDAAQGIEAQTLANVYLALDNDLEIMPIINKIDLPAADPERVRTEIEDVIGLDASEAVLASAKAGIGIEEILEQIVEKVPAPTGDVTAPLKALIFDSVYDAYRGVILQVRVMDGVVKPGDKIQLMSNSKTFDVAEVGIFTPKAVGRDFLATGDVGYIAASIKTVQDTRVGDTVTLATNPAAEPLHGYKQMNPMVFAGLYPIESNKYNDLREALEKLQLNDASLQFEPETSQALGFGFRCGFLGLLHMDVIQERLEREFNIDLIMTAPSVIYKVNLTDGESMDVSNPSEFPDPTKIATIEEPYVKAQIMVPQEFVGAVMELAQRKRGDFVTMDYIDDNRVNVIYQIPLAEIVFDFFDKLKSSTRGYASFDYELSEYRPSKLVKMDILLNGDKVDALSFIVHKDFAYERGKLIVDKLKKIIPRQQFEVPIQAAIGHKIVARTDIKALRKNVLAKCYGGDVSRKRKLLEKQKAGKKRMKSIGSVEVPQEAFLSVLSMDEE.

The 183-residue stretch at 11–193 (GKIRNFSIIA…QIVEKVPAPT (183 aa)) folds into the tr-type G domain. GTP is bound by residues 23–28 (DHGKST) and 140–143 (NKID).

This sequence belongs to the TRAFAC class translation factor GTPase superfamily. Classic translation factor GTPase family. LepA subfamily.

The protein localises to the cell membrane. The enzyme catalyses GTP + H2O = GDP + phosphate + H(+). Its function is as follows. Required for accurate and efficient protein synthesis under certain stress conditions. May act as a fidelity factor of the translation reaction, by catalyzing a one-codon backward translocation of tRNAs on improperly translocated ribosomes. Back-translocation proceeds from a post-translocation (POST) complex to a pre-translocation (PRE) complex, thus giving elongation factor G a second chance to translocate the tRNAs correctly. Binds to ribosomes in a GTP-dependent manner. The chain is Elongation factor 4 from Streptococcus pneumoniae (strain Taiwan19F-14).